The following is a 400-amino-acid chain: NADH-ubiquinone oxidoreductase 49 kDa subunit (400 aa).

It belongs to the complex I 49 kDa subunit family.

It localises to the mitochondrion. The enzyme catalyses a ubiquinone + NADH + 5 H(+)(in) = a ubiquinol + NAD(+) + 4 H(+)(out). Its function is as follows. Core subunit of the mitochondrial membrane respiratory chain NADH dehydrogenase (Complex I) that is believed to belong to the minimal assembly required for catalysis. Complex I functions in the transfer of electrons from NADH to the respiratory chain. The immediate electron acceptor for the enzyme is believed to be ubiquinone. Component of the iron-sulfur (IP) fragment of the enzyme. Component of the iron-sulfur (IP) fragment of the enzyme. This Paramecium tetraurelia protein is NADH-ubiquinone oxidoreductase 49 kDa subunit (NAD7).